The following is a 164-amino-acid chain: V-type proton ATPase subunit c' (164 aa).

Topologically, residues 1-15 (MTDDLVNEYAPAFAP) are lumenal. Residues 16–36 (FFGFAGCAAAMILSSLGAAIG) form a helical membrane-spanning segment. Over 37-58 (TAKSGIGISGIGTFRPELIMKS) the chain is Cytoplasmic. The chain crosses the membrane as a helical span at residues 59 to 79 (LIPVVMSGILAVYGLVVAVLV). The Lumenal segment spans residues 80-97 (AGGLSPTEEYTLFNGFMH). Residues 98–118 (LAAGLCVGFACLSSGYAIGIV) traverse the membrane as a helical segment. At 119–135 (GDVGVRKFMHQPRLFVG) the chain is on the cytoplasmic side. The chain crosses the membrane as a helical span at residues 136–156 (IVLILIFAEVLGLYGMIIALI). Residues 157–164 (LNTRGSGN) lie on the Lumenal side of the membrane.

It belongs to the V-ATPase proteolipid subunit family. In terms of assembly, V-ATPase is a heteromultimeric enzyme composed of a peripheral catalytic V1 complex (components A to H) attached to an integral membrane V0 proton pore complex (components: a, c, c', c'', d, e, f and VOA1). The decameric c-ring forms the proton-conducting pore, and is composed of eight proteolipid subunits c, one subunit c' and one subunit c''.

Its subcellular location is the vacuole membrane. In terms of biological role, proton-conducting pore forming subunit of the V0 complex of vacuolar(H+)-ATPase (V-ATPase), a multisubunit enzyme composed of a peripheral complex (V1) that hydrolyzes ATP and a membrane integral complex (V0) that translocates protons. V-ATPase is responsible for acidifying and maintaining the pH of intracellular compartments. The protein is V-type proton ATPase subunit c' (VMA11) of Eremothecium gossypii (strain ATCC 10895 / CBS 109.51 / FGSC 9923 / NRRL Y-1056) (Yeast).